The sequence spans 192 residues: Probable cobalt-precorrin-6B C(15)-methyltransferase (decarboxylating) (192 aa).

S-adenosyl-L-methionine contacts are provided by residues T20, 44-48 (GSGTG), E68, and A96.

It belongs to the methyltransferase superfamily. Archaeal-type CbiT family.

The enzyme catalyses Co-precorrin-6B + S-adenosyl-L-methionine = Co-precorrin-7 + S-adenosyl-L-homocysteine + CO2. Its pathway is cofactor biosynthesis; adenosylcobalamin biosynthesis; cob(II)yrinate a,c-diamide from sirohydrochlorin (anaerobic route): step 8/10. Its function is as follows. Catalyzes the methylation of C-15 in cobalt-precorrin-6B followed by the decarboxylation of C-12 to form cobalt-precorrin-7. This Sulfurisphaera tokodaii (strain DSM 16993 / JCM 10545 / NBRC 100140 / 7) (Sulfolobus tokodaii) protein is Probable cobalt-precorrin-6B C(15)-methyltransferase (decarboxylating).